Consider the following 112-residue polypeptide: MSDVSLKLSAKDIYEKDFEKTMARGYRREEVDAFLDDIITDYQKMADMNNEVVKLSEENHKLKKELEELRLRVATSRPQDNKNFSSNNSSSASNNVDILKRISNLEKAVFGK.

Residues 42–77 adopt a coiled-coil conformation; sequence YQKMADMNNEVVKLSEENHKLKKELEELRLRVATSR. Residues 74 to 96 are disordered; sequence ATSRPQDNKNFSSNNSSSASNNV. A compositionally biased stretch (low complexity) spans 81-95; it reads NKNFSSNNSSSASNN.

The protein belongs to the GpsB family. Forms polymers through the coiled coil domains. Interacts with PBP1, MreC and EzrA.

It is found in the cytoplasm. Functionally, divisome component that associates with the complex late in its assembly, after the Z-ring is formed, and is dependent on DivIC and PBP2B for its recruitment to the divisome. Together with EzrA, is a key component of the system that regulates PBP1 localization during cell cycle progression. Its main role could be the removal of PBP1 from the cell pole after pole maturation is completed. Also contributes to the recruitment of PBP1 to the division complex. Not essential for septum formation. This Staphylococcus epidermidis (strain ATCC 12228 / FDA PCI 1200) protein is Cell cycle protein GpsB.